A 195-amino-acid chain; its full sequence is Imidazoleglycerol-phosphate dehydratase (195 aa).

Belongs to the imidazoleglycerol-phosphate dehydratase family.

The protein resides in the cytoplasm. The enzyme catalyses D-erythro-1-(imidazol-4-yl)glycerol 3-phosphate = 3-(imidazol-4-yl)-2-oxopropyl phosphate + H2O. It participates in amino-acid biosynthesis; L-histidine biosynthesis; L-histidine from 5-phospho-alpha-D-ribose 1-diphosphate: step 6/9. This chain is Imidazoleglycerol-phosphate dehydratase, found in Leuconostoc mesenteroides subsp. mesenteroides (strain ATCC 8293 / DSM 20343 / BCRC 11652 / CCM 1803 / JCM 6124 / NCDO 523 / NBRC 100496 / NCIMB 8023 / NCTC 12954 / NRRL B-1118 / 37Y).